The following is a 1953-amino-acid chain: MGVKKKKEMQVAALTICHQDLETLKSFADVEGKNLASLLLHCVQLTDGVSQIHYIKQIVPLLEKADKNGMCDPTIQSCLDILAGIYLSLSLKNPLKKVLASSLNSLPDFFLPEAMHRFTSRLQEELNTTDLYSYRKVTDNISSCMENFNLGRASVNNLLKNVLHFLQKSLIEILEENRKCAGNHIIQTQLMNDLLVGIRVSMMLVQKVQDFQGNLWKTSDSPIWQNMCGLLSIFTKVLSDDDLLQTVQSTSGLAIILFIKTMFHPSEKIPHLISSVLLRSVDCTSVPEWFMSSCRSLCCGDISQSAVLFLCQGTLAMLDWQNGSMGRSGEALLLDTAHVLFTLSSQIKEPTLEMFLSRILASWTNSAIQVLESSSPSLTDSLNGNSSIVGRLLEYVYTHWEHPLDALRHQTKIMFKNLLQMHRLTVEGADFVPDPFFVELTESLLRLEWHIKGKYTCLGCLVECIGVEHILAIDKTIPSQILEVMGDQSLVPYASDLLETMFRNHKSHLKSQTAESSWIDQWHETWVSPLLFILCEGNLDQKSYVIDYYLPKLLSYSPESLQYMVKILQTSIDAKTGQEQSFPSLGSCNSRGALGALMACLRIARAHGHLQSATDTWENLVSDARIKQGLIHQHCQVRIDTLGLLCESNRSTEIVSMEEMQWIQFFITYNLNSQSPGVRQQICSLLKKLFCRIQESSQVLYKLEQSKSKREPENELTKQHPSVSLQQYKNFMSSICNSLFEALFPGSSYSTRFSALTILGSIAEVFHVPEGRIYTVYQLSHDIDVGRFQTLMECFTSTFEDVKILAFDLLMKLSKTAVHFQDSGKLQGLFQAALELSTSTKPYDCVTASYLLNFLIWQDALPSSLSAYLTQQVACDNGDRPAAVVERNTLMVIKCLMENLEEEVSQAENSLLQAAAAFPMYGRVHCITGALQKLSLNSLQLVSEWRPVVEKLLLMSYRLSTVVSPVIQSSSPEGLIPMDTDSESASRLQMILNEIQPRDTNDYFNQAKILKEHDSFDMKDLNASVVNIDTSTEIKGKEVKTCDVTAQMVLVCCWRSMKEVALLLGMLCQLLPMQPVPESSDGLLTVEQVKEIGDYFKQHLLQSRHRGAFELAYTGFVKLTEVLNRCPNVSLQKLPEQWLWSVLEEIKCSDPSSKLCATRRSAGIPFYIQALLASEPKKGRMDLLKITMKELISLAGPTDDIQSTVPQVHALNILRALFRDTRLGENIIPYVADGAKAAILGFTSPVWAVRNSSTLLFSALITRIFGVKRAKDEHSKTNRMTGREFFSRFPELYPFLLKQLETVANTVDSDMGEPNRHPSMFLLLLVLERLYASPMDGTSSALSMGPFVPFIMRCGHSPVYHSREMAARALVPFVMIDHIPNTIRTLLSTLPSCTDQCFRQNHIHGTLLQVFHLLQAYSDSKHGTNSDFQHELTDITVCTKAKLWLAKRQNPCLVTRAVYIDILFLLTCCLNRSAKDNQPVLESLGFWEEVRGIISGSELITGFPWAFKVPGLPQYLQSLTRLAIAAVWAAAAKSGERETNVPISFSQLLESAFPEVRSLTLEALLEKFLAAASGLGEKGVPPLLCNMGEKFLLLAMKENHPECFCKILKILHCMDPGEWLPQTEHCVHLTPKEFLIWTMDIASNERSEIQSVALRLASKVISHHMQTCVENRELIAAELKQWVQLVILSCEDHLPTESRLAVVEVLTSTTPLFLTNPHPILELQDTLALWKCVLTLLQSEEQAVRDAATETVTTAMSQENTCQSTEFAFCQVDASIALALALAVLCDLLQQWDQLAPGLPILLGWLLGESDDLVACVESMHQVEEDYLFEKAEVNFWAETLIFVKYLCKHLFCLLSKSGWRPPSPEMLCHLQRMVSEQCHLLSQFFRELPPAAEFVKTVEFTRLRIQEERTLACLRLLAFLEGKEGEDTLVLSVWDSYAESRQLTLPRTEAAC.

Residues 886-918 (ERNTLMVIKCLMENLEEEVSQAENSLLQAAAAF) are a coiled coil. Residues S1015, S1024, and S1161 each carry the phosphoserine modification.

The protein belongs to the THADA family. In terms of tissue distribution, expressed in pancreas, adrenal medulla, thyroid, adrenal cortex, testis, thymus, small intestine and stomach.

Functionally, together with methyltransferase FTSJ1, methylates the 2'-O-ribose of nucleotides at position 32 of the anticodon loop of substrate tRNAs. This Homo sapiens (Human) protein is tRNA (32-2'-O)-methyltransferase regulator THADA (THADA).